Here is a 67-residue protein sequence, read N- to C-terminus: Large ribosomal subunit protein uL29 (67 aa).

Belongs to the universal ribosomal protein uL29 family.

The polypeptide is Large ribosomal subunit protein uL29 (rpmC) (Thermus thermophilus).